The following is a 1217-amino-acid chain: MLTPQRSAWSLKSKVSSEKPRSKGKGITKNLDSAATPFPPLGLLNGGDLDRGGEDMEAWKRFKDEGLLDESICYKKDRESLASRIIELEKDLHEYQYNMGLLLIEKKEWSSHFEEMKMRLAEAEEILKREQAAHIIALTESEKREDNLRKALGVEKQCVTDLEKALREMRSEIAEVKYTAEKKMTEAFALEASIEEKRLDTERKLHSADAKLAEASRKSSEINRKLEDVEDRERKVQRELNSINSERKALEKDISEQKEHLREWEKKLQDGQNRLLDGQRHINEREERINEAEGGLKKKEEELEEAKRSIEGTRNTLKRKEEDLDVRLRSLVSKEKEIELKMKNLQKKEKDLHEIAEKLDHREREEIQKLLDEHRATLDTKKREFELELESKRKSVDEELKSKFAAVNKAEKEVNRKQGLISEGEKELESKMDKIKIKEKDLETKSKALKKWEESLKSDEKKLVAEKDQIMKDTHELKVSINELESLRDALNAEQHQIAEEREKLEISKEEREQYIQKQSELKQEIEKYRNMQEELSKGIESLREEREKFEKEWESLDEKKITLQRETKKIHEEKEKLEKWHHKDQERLRNEEANAKADIERQLEDIKLQKEAFENTMKHERLMAQEEVARRLADVTRELELRKHDLEMNMQKKQEEIERKLQGKEREFETRKEAELSRITSLINLNNSKLQKLRIEQDRLDREKEEVELQKKKLQEDQSEIQRDVDTLRQLSKNLKNQRAEFIKEKECFLAAAERCKTCQNCGVSISELEMVGIIQSSAEIENADIVLPSLTDDHIEQHMKNKGSHVTSPQTGSRVFGSGFLQKCTKIFKFSPGKNAETSATTTPLVFGEELDIAASEDAAANDNNPAADVERVTVNPSLVFGEQLDTAASEDAAANDNNPAADVERVTVNPPPLAPVATEQNETEESSLPPENDSPPKQRGGRQSTRRGRGGKTVRRTRTMEAVVDDAKAILGDTLIVEEAKESSQQNDEQSQGASVHTGGTSNTRQKRRRAPASEMTNSEHDVEESESQSQSISIGRGRRKKRQTSAASEVQAPVVERRYNLRHSTVAKNSVAATLAVSDQAKVQTKASHQASHDNNQISMGDDPALEGSHKVTHTVQKTTTASVMEVSSKPAMEETHEENIVVRSVEISEMSASEEAEGEVQGVPPIAEEPATPSSGSSTSGDIGNDDDMDDDDEEERHNASIGKKLWNFFTT.

Over residues 1–14 the composition is skewed to polar residues; it reads MLTPQRSAWSLKSK. The interval 1–45 is disordered; that stretch reads MLTPQRSAWSLKSKVSSEKPRSKGKGITKNLDSAATPFPPLGLLN. The stretch at 159 to 746 forms a coiled coil; that stretch reads VTDLEKALRE…KNQRAEFIKE (588 aa). Low complexity predominate over residues 892–904; sequence SEDAAANDNNPAA. Disordered stretches follow at residues 892–969, 981–1057, 1087–1117, and 1152–1217; these read SEDA…VVDD, EEAK…VQAP, VQTK…HKVT, and ISEM…FFTT. The span at 947 to 960 shows a compositional bias: basic residues; the sequence is STRRGRGGKTVRRT. 2 stretches are compositionally biased toward polar residues: residues 986 to 1007 and 1087 to 1103; these read SSQQ…TSNT and VQTK…NQIS. Residues 1173-1186 are compositionally biased toward low complexity; that stretch reads EEPATPSSGSSTSG. Residues 1189–1200 are compositionally biased toward acidic residues; sequence GNDDDMDDDDEE.

Belongs to the CRWN family.

Its subcellular location is the nucleus matrix. It is found in the nucleus lamina. Functionally, architectural component of nuclear structure that plays different roles in controlling nuclear size and morphology. Involved in the organization of multimeric complexes in the peripheral nucleoskeleton. The polypeptide is Nuclear matrix constituent protein 1 (Allium cepa (Onion)).